The chain runs to 369 residues: Putative F-box protein At1g70960 (369 aa).

In terms of domain architecture, F-box spans 3-54; that stretch reads NTSFETLPRHMQMEILSRVPLKFLMKFMCVSKKWASIIRGEEFREDYLFQSM.

The sequence is that of Putative F-box protein At1g70960 from Arabidopsis thaliana (Mouse-ear cress).